A 534-amino-acid polypeptide reads, in one-letter code: Probable protein kinase UbiB (534 aa).

The chain crosses the membrane as a helical span at residues 23–43; that stretch reads DLLFDLPLPWFLLALRYVLPW. Residues 125–492 enclose the Protein kinase domain; it reads RFDVEPLASA…WKKRKDDWFL (368 aa). ATP-binding positions include 131 to 139 and Lys-153; that span reads LASASVAQV. Residue Asp-288 is the Proton acceptor of the active site. 2 consecutive transmembrane segments (helical) span residues 490 to 510 and 512 to 532; these read WFLR…AAGG and LHEL…YLVV.

This sequence belongs to the ABC1 family. UbiB subfamily.

It localises to the cell inner membrane. It participates in cofactor biosynthesis; ubiquinone biosynthesis [regulation]. Functionally, is probably a protein kinase regulator of UbiI activity which is involved in aerobic coenzyme Q (ubiquinone) biosynthesis. The polypeptide is Probable protein kinase UbiB (Pseudomonas fluorescens (strain Pf0-1)).